Reading from the N-terminus, the 571-residue chain is Hemagglutinin-neuraminidase (571 aa).

Topologically, residues 1–26 (MDRAVNRVVLENEEREAKNTWRLVFR) are intravirion. The chain crosses the membrane as a helical span at residues 27 to 47 (IAVLLLMVMTLAISAAALVYS). The Virion surface portion of the chain corresponds to 48 to 571 (MGASTPRDLA…LVEILKDDRV (524 aa)). N-linked (GlcNAc...) asparagine; by host glycosylation occurs at N119. Residues 124–152 (GEPVHDPDYIGGIGKELIVDDISDVTSFY) are important for interaction with fusion/F protein. 3 disulfides stabilise this stretch: C172-C196, C186-C247, and C238-C251. The involved in neuraminidase activity stretch occupies residues 234–239 (NRKSCS). N-linked (GlcNAc...) asparagine; by host glycosylation is found at N341 and N433. 2 cysteine pairs are disulfide-bonded: C344–C461 and C455–C465. N481, N508, and N538 each carry an N-linked (GlcNAc...) asparagine; by host glycan. Residues C531 and C542 are joined by a disulfide bond.

It belongs to the paramyxoviruses hemagglutinin-neuraminidase family. In terms of assembly, homotetramer; composed of disulfide-linked homodimers. Interacts with F protein trimer. Interacts with host CG-1B; this interaction inhibits viral adsorption and replication rather than internalization.

It is found in the virion membrane. Its subcellular location is the host cell membrane. It catalyses the reaction Hydrolysis of alpha-(2-&gt;3)-, alpha-(2-&gt;6)-, alpha-(2-&gt;8)- glycosidic linkages of terminal sialic acid residues in oligosaccharides, glycoproteins, glycolipids, colominic acid and synthetic substrates.. Mediates the viral entry into the host cell together with fusion/F protein. Attaches the virus to sialic acid-containing cell receptors and thereby initiates infection. Binding of HN protein to the receptor induces a conformational change that allows the F protein to trigger virion/cell membranes fusion. Its function is as follows. Neuraminidase activity ensures the efficient spread of the virus by dissociating the mature virions from the neuraminic acid containing glycoproteins. This chain is Hemagglutinin-neuraminidase (HN), found in Gallus gallus (Chicken).